The chain runs to 279 residues: Energy-coupling factor transporter ATP-binding protein EcfA1 (279 aa).

The ABC transporter domain maps to 6 to 240; that stretch reads LSIEGVSFRY…GSKLERIGLD (235 aa). 40 to 47 contacts ATP; that stretch reads GHNGSGKS.

It belongs to the ABC transporter superfamily. Energy-coupling factor EcfA family. Forms a stable energy-coupling factor (ECF) transporter complex composed of 2 membrane-embedded substrate-binding proteins (S component), 2 ATP-binding proteins (A component) and 2 transmembrane proteins (T component).

The protein resides in the cell membrane. In terms of biological role, ATP-binding (A) component of a common energy-coupling factor (ECF) ABC-transporter complex. Unlike classic ABC transporters this ECF transporter provides the energy necessary to transport a number of different substrates. The polypeptide is Energy-coupling factor transporter ATP-binding protein EcfA1 (Geobacillus kaustophilus (strain HTA426)).